We begin with the raw amino-acid sequence, 309 residues long: Ribosomal RNA small subunit methyltransferase H (309 aa).

S-adenosyl-L-methionine contacts are provided by residues 33 to 35 (GGH), Asp-53, Phe-79, Asp-100, and Gln-107.

Belongs to the methyltransferase superfamily. RsmH family.

The protein localises to the cytoplasm. The catalysed reaction is cytidine(1402) in 16S rRNA + S-adenosyl-L-methionine = N(4)-methylcytidine(1402) in 16S rRNA + S-adenosyl-L-homocysteine + H(+). Its function is as follows. Specifically methylates the N4 position of cytidine in position 1402 (C1402) of 16S rRNA. The protein is Ribosomal RNA small subunit methyltransferase H of Clostridium botulinum (strain Loch Maree / Type A3).